The primary structure comprises 120 residues: Large ribosomal subunit protein bL12 (120 aa).

The protein belongs to the bacterial ribosomal protein bL12 family. In terms of assembly, homodimer. Part of the ribosomal stalk of the 50S ribosomal subunit. Forms a multimeric L10(L12)X complex, where L10 forms an elongated spine to which 2 to 4 L12 dimers bind in a sequential fashion. Binds GTP-bound translation factors.

In terms of biological role, forms part of the ribosomal stalk which helps the ribosome interact with GTP-bound translation factors. Is thus essential for accurate translation. This Shouchella clausii (strain KSM-K16) (Alkalihalobacillus clausii) protein is Large ribosomal subunit protein bL12.